A 101-amino-acid chain; its full sequence is Small ribosomal subunit protein uS14 (101 aa).

This sequence belongs to the universal ribosomal protein uS14 family. In terms of assembly, part of the 30S ribosomal subunit. Contacts proteins S3 and S10.

In terms of biological role, binds 16S rRNA, required for the assembly of 30S particles and may also be responsible for determining the conformation of the 16S rRNA at the A site. This is Small ribosomal subunit protein uS14 from Novosphingobium aromaticivorans (strain ATCC 700278 / DSM 12444 / CCUG 56034 / CIP 105152 / NBRC 16084 / F199).